The chain runs to 296 residues: Phosphatidylglycerol--prolipoprotein diacylglyceryl transferase (296 aa).

4 helical membrane passes run 28-48 (WYGL…IYLA), 72-92 (FALY…ILFY), 110-130 (GGLA…IFSW), and 139-159 (LTFL…AFMI). Arginine 160 lines the a 1,2-diacyl-sn-glycero-3-phospho-(1'-sn-glycerol) pocket. Helical transmembrane passes span 197-217 (VQLY…FLSY), 226-246 (GWVT…AEFF), and 263-283 (GQIL…ACFL).

The protein belongs to the Lgt family.

It is found in the cell inner membrane. It carries out the reaction L-cysteinyl-[prolipoprotein] + a 1,2-diacyl-sn-glycero-3-phospho-(1'-sn-glycerol) = an S-1,2-diacyl-sn-glyceryl-L-cysteinyl-[prolipoprotein] + sn-glycerol 1-phosphate + H(+). The protein operates within protein modification; lipoprotein biosynthesis (diacylglyceryl transfer). Functionally, catalyzes the transfer of the diacylglyceryl group from phosphatidylglycerol to the sulfhydryl group of the N-terminal cysteine of a prolipoprotein, the first step in the formation of mature lipoproteins. This chain is Phosphatidylglycerol--prolipoprotein diacylglyceryl transferase, found in Chlamydia caviae (strain ATCC VR-813 / DSM 19441 / 03DC25 / GPIC) (Chlamydophila caviae).